The primary structure comprises 202 residues: MSRYRGPRLRVVRRLGELPGLTRKNARRAYAPGQHGQARKKRSEYAIRLEEKQKLRFNYGVSEKQLIRYVRKARRATGSTGQVLLQLLEMRLDNTVFRLGMAGTIPGARQLVNHGHVTVNGRVVDIASYQCRPGDVIGVRNQERSQDLVKRNMEYPGLANLPSHLEFDKNTLVGKVNGVVEREWIALSINELLVVEYYSRKV.

The segment at 23-42 (RKNARRAYAPGQHGQARKKR) is disordered. The S4 RNA-binding domain occupies 90–153 (MRLDNTVFRL…RSQDLVKRNM (64 aa)).

It belongs to the universal ribosomal protein uS4 family. As to quaternary structure, part of the 30S ribosomal subunit. Contacts protein S5. The interaction surface between S4 and S5 is involved in control of translational fidelity.

In terms of biological role, one of the primary rRNA binding proteins, it binds directly to 16S rRNA where it nucleates assembly of the body of the 30S subunit. Functionally, with S5 and S12 plays an important role in translational accuracy. The protein is Small ribosomal subunit protein uS4 of Microcystis aeruginosa (strain NIES-843 / IAM M-2473).